Consider the following 251-residue polypeptide: CDP-diacylglycerol pyrophosphatase (251 aa).

The helical transmembrane segment at 4-24 (AGLLFLVMIVIAVVAAGIGYW) threads the bilayer.

It belongs to the Cdh family.

The protein localises to the cell inner membrane. The enzyme catalyses a CDP-1,2-diacyl-sn-glycerol + H2O = a 1,2-diacyl-sn-glycero-3-phosphate + CMP + 2 H(+). Its pathway is phospholipid metabolism; CDP-diacylglycerol degradation; phosphatidate from CDP-diacylglycerol: step 1/1. In Escherichia coli O127:H6 (strain E2348/69 / EPEC), this protein is CDP-diacylglycerol pyrophosphatase.